The sequence spans 137 residues: uncharacterized protein (137 aa).

A helical membrane pass occupies residues 4–21; sequence ISWQIVLAVIGVVAGFII.

It localises to the membrane. This is an uncharacterized protein from Archaeoglobus fulgidus (strain ATCC 49558 / DSM 4304 / JCM 9628 / NBRC 100126 / VC-16).